Consider the following 986-residue polypeptide: Rho guanine nucleotide exchange factor 2 (986 aa).

The segment at 39–86 (GHLFTTISVSGMTMCYACNKSITAKEALICPTCNVTIHNRCKDTLANC) adopts a Phorbol-ester/DAG-type zinc-finger fold. Phosphoserine is present on residues serine 109, serine 122, serine 129, serine 133, and serine 137. Residues 131–161 (RQSLLGSRRGRSSLSLAKSVSTTNIAGHFND) form an interaction with DYNLT1 region. A Phosphoserine; by PAK4 modification is found at serine 143. 5 positions are modified to phosphoserine: serine 151, serine 163, serine 172, serine 174, and serine 177. The DH domain occupies 235-432 (KQQDVIYELI…KELLSNVDEG (198 aa)). At lysine 353 the chain carries N6-acetyllysine. Positions 472–571 (KLIHDGCLLW…WIRVIQQSVR (100 aa)) constitute a PH domain. A coiled-coil region spans residues 587 to 611 (EAYLRRIKMELQQKDRALVELLREK). A phosphoserine mark is found at serine 645 and serine 648. At threonine 679 the chain carries Phosphothreonine; by MAPK1 or MAPK3. The tract at residues 683 to 705 (PALPLEPDSGGNTSPGVTANGEA) is disordered. Serine 691, serine 696, serine 711, and serine 782 each carry phosphoserine. Positions 798-867 (EKQATELALL…RQLAALGQTE (70 aa)) form a coiled coil. The interval 862–986 (ALGQTEPLPA…RDGEAVASES (125 aa)) is disordered. Serine 886 carries the phosphoserine; by PAK1 and AURKA modification. The residue at position 894 (tyrosine 894) is a Phosphotyrosine. Serine 896 is subject to Phosphoserine; by PAK4. The segment covering 920–939 (RNFEDRERQELGSPEERLQD) has biased composition (basic and acidic residues). Phosphoserine occurs at positions 932, 940, and 941. Residues 941-950 (SDPDTGSEEE) are compositionally biased toward acidic residues. Threonine 945 is modified (phosphothreonine). Serine 947, serine 952, serine 953, serine 956, and serine 960 each carry phosphoserine.

As to quaternary structure, found in a complex composed at least of ARHGEF2, NOD2 and RIPK2. Interacts with RIPK2; the interaction mediates tyrosine phosphorylation of RIPK2 by Src kinase CSK. Interacts with RIPK1 and RIPK3. Interacts with YWHAZ/14-3-3 zeta; when phosphorylated at Ser-886. Interacts with the kinases PAK4, AURKA and MAPK1. Interacts with RHOA and RAC1. Interacts with NOD1. Interacts (via the N-terminal zinc finger) with CAPN6 (via domain II). Interacts with DYNLT1. In terms of processing, phosphorylation of Ser-886 by PAK1 induces binding to protein YWHAZ, promoting its relocation to microtubules and the inhibition of its activity. Phosphorylated by AURKA and CDK1 during mitosis, which negatively regulates its activity. Phosphorylation by MAPK1 or MAPK3 increases nucleotide exchange activity. Phosphorylation by PAK4 releases GEF-H1 from the microtubules. Phosphorylated on serine, threonine and tyrosine residues in a RIPK2-dependent manner.

Its subcellular location is the cytoplasm. The protein resides in the cytoskeleton. It is found in the cell junction. The protein localises to the tight junction. It localises to the golgi apparatus. Its subcellular location is the spindle. The protein resides in the cell projection. It is found in the ruffle membrane. The protein localises to the cytoplasmic vesicle. In terms of biological role, activates Rho-GTPases by promoting the exchange of GDP for GTP. May be involved in epithelial barrier permeability, cell motility and polarization, dendritic spine morphology, antigen presentation, leukemic cell differentiation, cell cycle regulation, innate immune response, and cancer. Binds Rac-GTPases, but does not seem to promote nucleotide exchange activity toward Rac-GTPases, which was uniquely reported in PubMed:9857026. May stimulate instead the cortical activity of Rac. Inactive toward CDC42, TC10, or Ras-GTPases. Forms an intracellular sensing system along with NOD1 for the detection of microbial effectors during cell invasion by pathogens. Required for RHOA and RIP2 dependent NF-kappaB signaling pathways activation upon S.flexneri cell invasion. Involved not only in sensing peptidoglycan (PGN)-derived muropeptides through NOD1 that is independent of its GEF activity, but also in the activation of NF-kappaB by Shigella effector proteins (IpgB2 and OspB) which requires its GEF activity and the activation of RhoA. Involved in innate immune signaling transduction pathway promoting cytokine IL6/interleukin-6 and TNF-alpha secretion in macrophage upon stimulation by bacterial peptidoglycans; acts as a signaling intermediate between NOD2 receptor and RIPK2 kinase. Contributes to the tyrosine phosphorylation of RIPK2 through Src tyrosine kinase leading to NF-kappaB activation by NOD2. Overexpression activates Rho-, but not Rac-GTPases, and increases paracellular permeability. Involved in neuronal progenitor cell division and differentiation. Involved in the migration of precerebellar neurons. This is Rho guanine nucleotide exchange factor 2 (ARHGEF2) from Homo sapiens (Human).